The chain runs to 693 residues: Elongation factor G 1 (693 aa).

A tr-type G domain is found at 4 to 281; sequence NKLRNIGISA…AVTRFLPSPH (278 aa). Residues 13 to 20, 80 to 84, and 134 to 137 each bind GTP; these read AHIDSGKT, DTPGH, and NKCD.

Belongs to the TRAFAC class translation factor GTPase superfamily. Classic translation factor GTPase family. EF-G/EF-2 subfamily.

The protein resides in the cytoplasm. Catalyzes the GTP-dependent ribosomal translocation step during translation elongation. During this step, the ribosome changes from the pre-translocational (PRE) to the post-translocational (POST) state as the newly formed A-site-bound peptidyl-tRNA and P-site-bound deacylated tRNA move to the P and E sites, respectively. Catalyzes the coordinated movement of the two tRNA molecules, the mRNA and conformational changes in the ribosome. This Borreliella burgdorferi (strain ATCC 35210 / DSM 4680 / CIP 102532 / B31) (Borrelia burgdorferi) protein is Elongation factor G 1 (fusA).